The chain runs to 937 residues: Lysosomal alpha-glucosidase (937 aa).

The first 23 residues, 1 to 23, serve as a signal peptide directing secretion; it reads MMRWPPCSRPLLGVCTLLSLALL. The propeptide occupies 24–60; it reads GHILLHDLEVVPRELRGFSQDEIHQACQPGASSPECR. The 51-residue stretch at 68–118 folds into the P-type domain; it reads TQCDLPPNSRFDCAPDKGITPQQCEARGCCYMPAEWPPDAQMGQPWCFFPP. Intrachain disulfides connect cysteine 70-cysteine 97, cysteine 80-cysteine 96, and cysteine 91-cysteine 114. Asparagine 127, asparagine 220, asparagine 259, and asparagine 377 each carry an N-linked (GlcNAc...) asparagine glycan. Aspartate 391 provides a ligand contact to substrate. Asparagine 457 is a glycosylation site (N-linked (GlcNAc...) asparagine). The active-site Nucleophile is the aspartate 505. Glutamate 508 is an active-site residue. Residues cysteine 520 and cysteine 545 are joined by a disulfide bond. Positions 587 and 603 each coordinate substrate. Cysteine 634 and cysteine 645 are oxidised to a cystine. Asparagine 639 is a glycosylation site (N-linked (GlcNAc...) asparagine). Histidine 661 is a substrate binding site. Asparagine 867, asparagine 888, and asparagine 910 each carry an N-linked (GlcNAc...) asparagine glycan.

The protein belongs to the glycosyl hydrolase 31 family.

It is found in the lysosome. The protein localises to the lysosome membrane. It carries out the reaction Hydrolysis of terminal, non-reducing (1-&gt;4)-linked alpha-D-glucose residues with release of alpha-D-glucose.. Its function is as follows. Essential for the degradation of glycogen in lysosomes. Has highest activity on alpha-1,4-linked glycosidic linkages, but can also hydrolyze alpha-1,6-linked glucans. In Bos taurus (Bovine), this protein is Lysosomal alpha-glucosidase (GAA).